Reading from the N-terminus, the 173-residue chain is Photosystem I assembly protein Ycf3 (173 aa).

TPR repeat units lie at residues 35–68 (AFAY…EEDP), 72–105 (SYTF…NPKM), and 120–153 (GEQA…APDN).

Belongs to the Ycf3 family.

The protein resides in the plastid. The protein localises to the cyanelle thylakoid membrane. Functionally, essential for the assembly of the photosystem I (PSI) complex. May act as a chaperone-like factor to guide the assembly of the PSI subunits. In Cyanophora paradoxa, this protein is Photosystem I assembly protein Ycf3.